Here is a 312-residue protein sequence, read N- to C-terminus: 4-diphosphocytidyl-2-C-methyl-D-erythritol kinase (312 aa).

Lys-10 is a catalytic residue. Residue Pro-105–Ala-115 participates in ATP binding. Asp-146 is a catalytic residue.

This sequence belongs to the GHMP kinase family. IspE subfamily.

It catalyses the reaction 4-CDP-2-C-methyl-D-erythritol + ATP = 4-CDP-2-C-methyl-D-erythritol 2-phosphate + ADP + H(+). It functions in the pathway isoprenoid biosynthesis; isopentenyl diphosphate biosynthesis via DXP pathway; isopentenyl diphosphate from 1-deoxy-D-xylulose 5-phosphate: step 3/6. Catalyzes the phosphorylation of the position 2 hydroxy group of 4-diphosphocytidyl-2C-methyl-D-erythritol. In Corynebacterium glutamicum (strain R), this protein is 4-diphosphocytidyl-2-C-methyl-D-erythritol kinase.